A 345-amino-acid polypeptide reads, in one-letter code: S-adenosylmethionine:tRNA ribosyltransferase-isomerase (345 aa).

This sequence belongs to the QueA family. As to quaternary structure, monomer.

It localises to the cytoplasm. It catalyses the reaction 7-aminomethyl-7-carbaguanosine(34) in tRNA + S-adenosyl-L-methionine = epoxyqueuosine(34) in tRNA + adenine + L-methionine + 2 H(+). The protein operates within tRNA modification; tRNA-queuosine biosynthesis. Functionally, transfers and isomerizes the ribose moiety from AdoMet to the 7-aminomethyl group of 7-deazaguanine (preQ1-tRNA) to give epoxyqueuosine (oQ-tRNA). The chain is S-adenosylmethionine:tRNA ribosyltransferase-isomerase from Azoarcus sp. (strain BH72).